Consider the following 500-residue polypeptide: Melanopsin-like (500 aa).

Residues 1–65 (MSHHSSWRGH…TVDVPDHAHY (65 aa)) lie on the Extracellular side of the membrane. Asn18 carries N-linked (GlcNAc...) asparagine glycosylation. A helical membrane pass occupies residues 66-86 (IIGSVILIVGITGVIGNALVV). The Cytoplasmic portion of the chain corresponds to 87-101 (YVFCRSRTLRTAGNM). Residues 102–122 (FIVNLAVADFLMSVTQSPVFF) form a helical membrane-spanning segment. Residues 123–138 (AASLHRRWVFGERPCE) are Extracellular-facing. A disulfide bond links Cys137 and Cys215. Residues 139 to 159 (LYAFCGALFGICSMMTLTAIA) form a helical membrane-spanning segment. The Cytoplasmic portion of the chain corresponds to 160 to 182 (ADRCLAITQPLALVSRVSRRKAG). Residues 183–203 (AVLVVVWLYSLGWSLPPFFGW) form a helical membrane-spanning segment. At 204–232 (SAYVPEGLQTSCSWDYMTFTPSVRAYTIL) the chain is on the extracellular side. A helical transmembrane segment spans residues 233–253 (LFVFVFFIPLGIIGSCYFAIF). The Cytoplasmic portion of the chain corresponds to 254-286 (QTIRAAGKEIRELDCGETHKVYERMQNEWKMAK). Residues 287–307 (VALVVIVLFIISWSPYSVVAL) traverse the membrane as a helical segment. Residues 308–322 (TATAGYSHFLTPYMN) are Extracellular-facing. Residues 323 to 343 (SVPAVIAKASAIHNPIIYAIT) form a helical membrane-spanning segment. Lys330 bears the N6-(retinylidene)lysine mark. Residues 344 to 500 (HPKYRVAIAR…SDGKALLGGN (157 aa)) are Cytoplasmic-facing. Residues 404-428 (RWGKTRLSSASDSDSCWTESEADGS) are disordered. Positions 409-428 (RLSSASDSDSCWTESEADGS) are enriched in polar residues.

It belongs to the G-protein coupled receptor 1 family. Opsin subfamily. As to expression, expressed in a subset of retinal horizontal cells.

Its subcellular location is the cell membrane. Its function is as follows. Photoreceptor implicated in non-image-forming responses to light. This Danio rerio (Zebrafish) protein is Melanopsin-like (opn4l).